The following is a 180-amino-acid chain: NAD(P)H-quinone oxidoreductase subunit I, chloroplastic (180 aa).

4Fe-4S ferredoxin-type domains follow at residues 55 to 84 (GRIH…VDWK) and 95 to 124 (LNYS…MTEE). Cys64, Cys67, Cys70, Cys74, Cys104, Cys107, Cys110, and Cys114 together coordinate [4Fe-4S] cluster.

It belongs to the complex I 23 kDa subunit family. As to quaternary structure, NDH is composed of at least 16 different subunits, 5 of which are encoded in the nucleus. The cofactor is [4Fe-4S] cluster.

It is found in the plastid. It localises to the chloroplast thylakoid membrane. It catalyses the reaction a plastoquinone + NADH + (n+1) H(+)(in) = a plastoquinol + NAD(+) + n H(+)(out). It carries out the reaction a plastoquinone + NADPH + (n+1) H(+)(in) = a plastoquinol + NADP(+) + n H(+)(out). In terms of biological role, NDH shuttles electrons from NAD(P)H:plastoquinone, via FMN and iron-sulfur (Fe-S) centers, to quinones in the photosynthetic chain and possibly in a chloroplast respiratory chain. The immediate electron acceptor for the enzyme in this species is believed to be plastoquinone. Couples the redox reaction to proton translocation, and thus conserves the redox energy in a proton gradient. The sequence is that of NAD(P)H-quinone oxidoreductase subunit I, chloroplastic from Sorghum bicolor (Sorghum).